Consider the following 39-residue polypeptide: Mu-like prophage FluMu protein com (39 aa).

It belongs to the com family.

The sequence is that of Mu-like prophage FluMu protein com from Haemophilus influenzae (strain ATCC 51907 / DSM 11121 / KW20 / Rd).